The primary structure comprises 468 residues: Glutamine synthetase (468 aa).

A GS beta-grasp domain is found at histidine 14 to threonine 98. The 363-residue stretch at proline 106 to valine 468 folds into the GS catalytic domain. Positions 131 and 133 each coordinate Mg(2+). Glutamate 209 contacts ATP. Positions 214 and 221 each coordinate Mg(2+). L-glutamate contacts are provided by residues asparagine 265–glycine 266 and glycine 266. Histidine 270 is a Mg(2+) binding site. ATP is bound by residues histidine 272 to serine 274 and serine 274. L-glutamate is bound by residues arginine 322, glutamate 328, and arginine 340. ATP contacts are provided by arginine 340, arginine 345, and lysine 353. Mg(2+) is bound at residue glutamate 358. Arginine 360 serves as a coordination point for L-glutamate. An O-AMP-tyrosine modification is found at tyrosine 398.

The protein belongs to the glutamine synthetase family. Oligomer of 12 subunits arranged in the form of two hexameric ring. Mg(2+) is required as a cofactor.

It localises to the cytoplasm. It catalyses the reaction L-glutamate + NH4(+) + ATP = L-glutamine + ADP + phosphate + H(+). Its activity is regulated as follows. The activity of this enzyme could be controlled by adenylation under conditions of abundant glutamine. In terms of biological role, catalyzes the ATP-dependent biosynthesis of glutamine from glutamate and ammonia. The sequence is that of Glutamine synthetase from Azospirillum brasilense.